The primary structure comprises 466 residues: 3-isopropylmalate dehydratase large subunit (466 aa).

C345, C405, and C408 together coordinate [4Fe-4S] cluster.

It belongs to the aconitase/IPM isomerase family. LeuC type 1 subfamily. Heterodimer of LeuC and LeuD. The cofactor is [4Fe-4S] cluster.

It carries out the reaction (2R,3S)-3-isopropylmalate = (2S)-2-isopropylmalate. It functions in the pathway amino-acid biosynthesis; L-leucine biosynthesis; L-leucine from 3-methyl-2-oxobutanoate: step 2/4. Its function is as follows. Catalyzes the isomerization between 2-isopropylmalate and 3-isopropylmalate, via the formation of 2-isopropylmaleate. The chain is 3-isopropylmalate dehydratase large subunit from Microcystis aeruginosa (strain NIES-843 / IAM M-2473).